Here is a 263-residue protein sequence, read N- to C-terminus: Hydroxyacylglutathione hydrolase (263 aa).

Histidine 56, histidine 58, aspartate 60, histidine 61, histidine 115, aspartate 135, and histidine 175 together coordinate Zn(2+).

The protein belongs to the metallo-beta-lactamase superfamily. Glyoxalase II family. As to quaternary structure, monomer. Zn(2+) serves as cofactor.

It carries out the reaction an S-(2-hydroxyacyl)glutathione + H2O = a 2-hydroxy carboxylate + glutathione + H(+). Its pathway is secondary metabolite metabolism; methylglyoxal degradation; (R)-lactate from methylglyoxal: step 2/2. In terms of biological role, thiolesterase that catalyzes the hydrolysis of S-D-lactoyl-glutathione to form glutathione and D-lactic acid. In Polaromonas sp. (strain JS666 / ATCC BAA-500), this protein is Hydroxyacylglutathione hydrolase.